A 205-amino-acid chain; its full sequence is High frequency lysogenization protein HflD homolog (205 aa).

This sequence belongs to the HflD family.

It localises to the cytoplasm. Its subcellular location is the cell inner membrane. This Shewanella baltica (strain OS223) protein is High frequency lysogenization protein HflD homolog.